Reading from the N-terminus, the 426-residue chain is Putative F-box/LRR-repeat protein At4g15060 (426 aa).

The region spanning Met25–His71 is the F-box domain. LRR repeat units lie at residues Ser50 to Tyr75, Glu80 to Phe106, Ile160 to Arg187, Val188 to Arg213, Thr221 to Asp259, Glu265 to Ser290, Cys311 to Pro337, Cys338 to Leu363, and Asp373 to Trp399.

The sequence is that of Putative F-box/LRR-repeat protein At4g15060 from Arabidopsis thaliana (Mouse-ear cress).